The chain runs to 308 residues: Oxygen-dependent coproporphyrinogen-III oxidase (308 aa).

Substrate is bound at residue Ser100. The a divalent metal cation site is built by His104 and His114. Residue His114 is the Proton donor of the active site. Residue 116 to 118 (NFR) participates in substrate binding. 2 residues coordinate a divalent metal cation: His153 and His183. The tract at residues 248–283 (YVEFNLVFDRGTIFGLQSGGRTESILSSMPPIATWK) is important for dimerization. 266-268 (GGR) contacts substrate.

This sequence belongs to the aerobic coproporphyrinogen-III oxidase family. As to quaternary structure, homodimer. The cofactor is a divalent metal cation.

It is found in the cytoplasm. It catalyses the reaction coproporphyrinogen III + O2 + 2 H(+) = protoporphyrinogen IX + 2 CO2 + 2 H2O. Its pathway is porphyrin-containing compound metabolism; protoporphyrin-IX biosynthesis; protoporphyrinogen-IX from coproporphyrinogen-III (O2 route): step 1/1. Its function is as follows. Involved in the heme biosynthesis. Catalyzes the aerobic oxidative decarboxylation of propionate groups of rings A and B of coproporphyrinogen-III to yield the vinyl groups in protoporphyrinogen-IX. The protein is Oxygen-dependent coproporphyrinogen-III oxidase of Francisella tularensis subsp. tularensis (strain FSC 198).